We begin with the raw amino-acid sequence, 320 residues long: ATPase H(+)-transporting accessory protein 2 (320 aa).

Residues 1–17 (MLRVFVIFSLFIAAINA) form the signal peptide. The Lumenal portion of the chain corresponds to 18–277 (SGEFTVLNRP…YGSDYPVIFN (260 aa)). A helical membrane pass occupies residues 278–298 (IILWFMVVFGLSLLAICYAIA). The Cytoplasmic segment spans residues 299-320 (AMDPGRDSIIYRMTSTRIKKDN). The Mediates retrograde transport to the ER signature appears at 317–320 (KKDN).

In terms of assembly, interacts with fz and fz2. Interacts (via N-terminus) with stan. As an accessory component of the multisubunit proton-transporting vacuolar (V)-ATPase protein pump, might interacts with VhaAC45. Proteolytically cleaved by a furin-like convertase in the trans-Golgi network to generate N- and C-terminal fragments. Cleavage is reduced in the fat body.

It is found in the cell membrane. It localises to the endoplasmic reticulum membrane. Its subcellular location is the vesicle. The protein localises to the apical cell membrane. The protein resides in the golgi apparatus membrane. It is found in the secreted. Multifunctional protein which functions as a transmembrane receptor in the planar cell polarity (PCP) and is involved in the assembly of the proton-transporting vacuolar (V)-ATPase protein pump. As transmembrane receptor mediates fz/PCP signaling through interaction with fz and stabilizes asymmetric PCP domains through its interaction with stan. Also mediates Wnt/beta-cat signaling through interaction with fz/fz2. Probably by controlling the assembly of the V-ATPase pump and thus the acidification of the endo-lysosomal system, plays a role in many neuronal processes including synapse morphology and synaptic transmission. Functionally, stabilizes asymmetric Planar Cell Polarity (PCP) domains through its interaction with stan. This chain is ATPase H(+)-transporting accessory protein 2, found in Drosophila melanogaster (Fruit fly).